The chain runs to 476 residues: ATP synthase subunit beta (476 aa).

154 to 161 (GGAGVGKT) provides a ligand contact to ATP.

This sequence belongs to the ATPase alpha/beta chains family. As to quaternary structure, F-type ATPases have 2 components, CF(1) - the catalytic core - and CF(0) - the membrane proton channel. CF(1) has five subunits: alpha(3), beta(3), gamma(1), delta(1), epsilon(1). CF(0) has four main subunits: a(1), b(1), b'(1) and c(9-12).

The protein resides in the cell inner membrane. It carries out the reaction ATP + H2O + 4 H(+)(in) = ADP + phosphate + 5 H(+)(out). Produces ATP from ADP in the presence of a proton gradient across the membrane. The catalytic sites are hosted primarily by the beta subunits. In Rhodopseudomonas palustris (strain BisA53), this protein is ATP synthase subunit beta.